A 468-amino-acid chain; its full sequence is Siroheme synthase 3 (468 aa).

The precorrin-2 dehydrogenase /sirohydrochlorin ferrochelatase stretch occupies residues 1–204 (MDYLPIFCRL…GDSASANQLA (204 aa)). NAD(+)-binding positions include 22–23 (EV) and 43–44 (PE). S128 is modified (phosphoserine). The uroporphyrinogen-III C-methyltransferase stretch occupies residues 216 to 468 (GEVVLVGAGP…GAADAALASA (253 aa)). Residue P225 coordinates S-adenosyl-L-methionine. Residue D248 is the Proton acceptor of the active site. The active-site Proton donor is K270. S-adenosyl-L-methionine is bound by residues 301–303 (GGD), I306, 331–332 (TA), M383, and G412.

The protein in the N-terminal section; belongs to the precorrin-2 dehydrogenase / sirohydrochlorin ferrochelatase family. This sequence in the C-terminal section; belongs to the precorrin methyltransferase family.

It catalyses the reaction uroporphyrinogen III + 2 S-adenosyl-L-methionine = precorrin-2 + 2 S-adenosyl-L-homocysteine + H(+). It carries out the reaction precorrin-2 + NAD(+) = sirohydrochlorin + NADH + 2 H(+). The catalysed reaction is siroheme + 2 H(+) = sirohydrochlorin + Fe(2+). The protein operates within cofactor biosynthesis; adenosylcobalamin biosynthesis; precorrin-2 from uroporphyrinogen III: step 1/1. Its pathway is cofactor biosynthesis; adenosylcobalamin biosynthesis; sirohydrochlorin from precorrin-2: step 1/1. It functions in the pathway porphyrin-containing compound metabolism; siroheme biosynthesis; precorrin-2 from uroporphyrinogen III: step 1/1. It participates in porphyrin-containing compound metabolism; siroheme biosynthesis; siroheme from sirohydrochlorin: step 1/1. The protein operates within porphyrin-containing compound metabolism; siroheme biosynthesis; sirohydrochlorin from precorrin-2: step 1/1. Multifunctional enzyme that catalyzes the SAM-dependent methylations of uroporphyrinogen III at position C-2 and C-7 to form precorrin-2 via precorrin-1. Then it catalyzes the NAD-dependent ring dehydrogenation of precorrin-2 to yield sirohydrochlorin. Finally, it catalyzes the ferrochelation of sirohydrochlorin to yield siroheme. This chain is Siroheme synthase 3, found in Aeromonas hydrophila subsp. hydrophila (strain ATCC 7966 / DSM 30187 / BCRC 13018 / CCUG 14551 / JCM 1027 / KCTC 2358 / NCIMB 9240 / NCTC 8049).